The chain runs to 219 residues: Thymidylate kinase (219 aa).

9–16 (GIEGSGKT) is an ATP binding site.

Belongs to the thymidylate kinase family.

It catalyses the reaction dTMP + ATP = dTDP + ADP. Phosphorylation of dTMP to form dTDP in both de novo and salvage pathways of dTTP synthesis. This Pelobacter propionicus (strain DSM 2379 / NBRC 103807 / OttBd1) protein is Thymidylate kinase.